The primary structure comprises 165 residues: NADPH-dependent 7-cyano-7-deazaguanine reductase (165 aa).

The active-site Thioimide intermediate is the C56. D63 functions as the Proton donor in the catalytic mechanism. Substrate-binding positions include 78-80 (VES) and 97-98 (HE).

The protein belongs to the GTP cyclohydrolase I family. QueF type 1 subfamily.

Its subcellular location is the cytoplasm. The catalysed reaction is 7-aminomethyl-7-carbaguanine + 2 NADP(+) = 7-cyano-7-deazaguanine + 2 NADPH + 3 H(+). Its pathway is tRNA modification; tRNA-queuosine biosynthesis. Its function is as follows. Catalyzes the NADPH-dependent reduction of 7-cyano-7-deazaguanine (preQ0) to 7-aminomethyl-7-deazaguanine (preQ1). The polypeptide is NADPH-dependent 7-cyano-7-deazaguanine reductase (Bacillus cereus (strain ATCC 14579 / DSM 31 / CCUG 7414 / JCM 2152 / NBRC 15305 / NCIMB 9373 / NCTC 2599 / NRRL B-3711)).